A 156-amino-acid polypeptide reads, in one-letter code: Ribosomal RNA large subunit methyltransferase H (156 aa).

S-adenosyl-L-methionine contacts are provided by residues Leu-73, Gly-104, and 123 to 128; that span reads VSSLTL.

Belongs to the RNA methyltransferase RlmH family. In terms of assembly, homodimer.

It localises to the cytoplasm. It carries out the reaction pseudouridine(1915) in 23S rRNA + S-adenosyl-L-methionine = N(3)-methylpseudouridine(1915) in 23S rRNA + S-adenosyl-L-homocysteine + H(+). In terms of biological role, specifically methylates the pseudouridine at position 1915 (m3Psi1915) in 23S rRNA. The sequence is that of Ribosomal RNA large subunit methyltransferase H from Paraburkholderia phytofirmans (strain DSM 17436 / LMG 22146 / PsJN) (Burkholderia phytofirmans).